We begin with the raw amino-acid sequence, 269 residues long: Ribosomal RNA small subunit methyltransferase J (269 aa).

Residues 125-126 and aspartate 179 contribute to the S-adenosyl-L-methionine site; that span reads ER.

It belongs to the methyltransferase superfamily. RsmJ family.

Its subcellular location is the cytoplasm. It catalyses the reaction guanosine(1516) in 16S rRNA + S-adenosyl-L-methionine = N(2)-methylguanosine(1516) in 16S rRNA + S-adenosyl-L-homocysteine + H(+). Specifically methylates the guanosine in position 1516 of 16S rRNA. In Pseudomonas syringae pv. tomato (strain ATCC BAA-871 / DC3000), this protein is Ribosomal RNA small subunit methyltransferase J.